The chain runs to 153 residues: Putative WASP homolog-associated protein with actin, membranes and microtubules-like protein 1 (153 aa).

The stretch at 113-151 (AIQFYEIQLELYEVKFEILKNKEILLTTQLDSLERLIKD) forms a coiled coil.

In Homo sapiens (Human), this protein is Putative WASP homolog-associated protein with actin, membranes and microtubules-like protein 1 (WHAMMP3).